A 475-amino-acid polypeptide reads, in one-letter code: Serralysin G (475 aa).

Residues 1–14 constitute a propeptide that is removed on maturation; the sequence is MALYGKKTDLSSAS. His-186 is a Zn(2+) binding site. Glu-187 is an active-site residue. 2 residues coordinate Zn(2+): His-190 and Tyr-226. 30 residues coordinate Ca(2+): Arg-261, Gly-263, Thr-265, Asp-293, Gly-295, Gly-296, Asp-298, Glu-337, Gly-342, Gly-344, Asp-346, Asn-351, Asn-355, Gly-359, Gly-360, Ala-361, Gly-362, Asp-364, Gly-368, Gly-370, Gly-371, Asp-373, Gly-377, Gly-378, Ala-379, Gly-380, Asp-382, Asp-391, Asp-398, and Asp-408. 2 Hemolysin-type calcium-binding repeats span residues 340-357 and 358-375; these read IGGS…DNRI and DGGA…ADIL.

It belongs to the peptidase M10B family. Ca(2+) serves as cofactor. The cofactor is Zn(2+).

The protein localises to the secreted. The enzyme catalyses Preferential cleavage of bonds with hydrophobic residues in P1'.. This Dickeya chrysanthemi (Pectobacterium chrysanthemi) protein is Serralysin G (prtG).